We begin with the raw amino-acid sequence, 77 residues long: Membrane-associated ATPase epsilon chain (77 aa).

To E.hirae NtpH. As to quaternary structure, sul-ATPase is composed of six (or maybe five) subunits: alpha, beta, delta, gamma, C (proteolipid), and possibly epsilon.

The enzyme catalyses ATP + H2O + 4 H(+)(in) = ADP + phosphate + 5 H(+)(out). The protein is Membrane-associated ATPase epsilon chain (atpE) of Sulfolobus acidocaldarius (strain ATCC 33909 / DSM 639 / JCM 8929 / NBRC 15157 / NCIMB 11770).